The following is a 61-amino-acid chain: FTCFTTPSDTSETCPIGNNICYEKRWSGHGMQIEKGCVASCPSFESHYKFLLCCRIENCNQ.

Disulfide bonds link cysteine 3–cysteine 21, cysteine 14–cysteine 37, cysteine 41–cysteine 53, and cysteine 54–cysteine 59.

It belongs to the three-finger toxin family. Short-chain subfamily. Orphan group VI sub-subfamily. In terms of tissue distribution, expressed by the venom gland.

It localises to the secreted. This Hemachatus haemachatus (Rinkhals) protein is Weak toxin CM-1c.